Here is a 124-residue protein sequence, read N- to C-terminus: Small ribosomal subunit protein bS6 (124 aa).

Residues 97-124 (TGPSPMMKEVQREEAKKAAAAQPTEAQA) form a disordered region. Residues 114–124 (AAAAQPTEAQA) show a composition bias toward low complexity.

This sequence belongs to the bacterial ribosomal protein bS6 family.

Functionally, binds together with bS18 to 16S ribosomal RNA. The sequence is that of Small ribosomal subunit protein bS6 from Paraburkholderia phymatum (strain DSM 17167 / CIP 108236 / LMG 21445 / STM815) (Burkholderia phymatum).